The chain runs to 486 residues: Glutamyl-tRNA(Gln) amidotransferase subunit A (486 aa).

Active-site charge relay system residues include lysine 74 and serine 149. Serine 173 acts as the Acyl-ester intermediate in catalysis.

The protein belongs to the amidase family. GatA subfamily. Heterotrimer of A, B and C subunits.

It carries out the reaction L-glutamyl-tRNA(Gln) + L-glutamine + ATP + H2O = L-glutaminyl-tRNA(Gln) + L-glutamate + ADP + phosphate + H(+). In terms of biological role, allows the formation of correctly charged Gln-tRNA(Gln) through the transamidation of misacylated Glu-tRNA(Gln) in organisms which lack glutaminyl-tRNA synthetase. The reaction takes place in the presence of glutamine and ATP through an activated gamma-phospho-Glu-tRNA(Gln). This Prochlorococcus marinus (strain MIT 9313) protein is Glutamyl-tRNA(Gln) amidotransferase subunit A.